Here is a 209-residue protein sequence, read N- to C-terminus: Uracil phosphoribosyltransferase (209 aa).

5-phospho-alpha-D-ribose 1-diphosphate is bound by residues R79, R104, and 131 to 139; that span reads DPMLATGNS. Uracil is bound by residues I194 and 199–201; that span reads GDA. D200 contacts 5-phospho-alpha-D-ribose 1-diphosphate.

This sequence belongs to the UPRTase family. Requires Mg(2+) as cofactor.

The catalysed reaction is UMP + diphosphate = 5-phospho-alpha-D-ribose 1-diphosphate + uracil. It functions in the pathway pyrimidine metabolism; UMP biosynthesis via salvage pathway; UMP from uracil: step 1/1. With respect to regulation, allosterically activated by GTP. Catalyzes the conversion of uracil and 5-phospho-alpha-D-ribose 1-diphosphate (PRPP) to UMP and diphosphate. The polypeptide is Uracil phosphoribosyltransferase (Polaromonas naphthalenivorans (strain CJ2)).